The chain runs to 378 residues: Plant intracellular Ras-group-related LRR protein 8 (378 aa).

Residues 10-86 form the Ubiquitin-like domain; that stretch reads PTITVQVKFG…VMLMASQGLH (77 aa). Positions 85–120 are disordered; that stretch reads LHQGDGPITKNSSVPAPSTRRASNVKEAQIQKSDTN. The span at 93 to 106 shows a compositional bias: polar residues; the sequence is TKNSSVPAPSTRRA. 9 LRR repeats span residues 129 to 152, 153 to 176, 178 to 201, 202 to 225, 226 to 250, 252 to 271, 272 to 293, 294 to 317, and 319 to 344; these read WKAT…VWGC, GSSI…IAAL, SLQK…GLTC, VQTL…LGSI, THLR…LLKH, EILI…IGGC, ESLN…AFGN, LQHL…FFIK, and SQLI…GWEE.

It belongs to the SHOC2 family. As to expression, widely expressed except in panicles.

Its function is as follows. Leucine-rich repeat protein that likely mediates protein interactions, possibly in the context of signal transduction. This chain is Plant intracellular Ras-group-related LRR protein 8 (IRL8), found in Oryza sativa subsp. japonica (Rice).